A 189-amino-acid polypeptide reads, in one-letter code: HGPRTase-like protein (189 aa).

This sequence belongs to the purine/pyrimidine phosphoribosyltransferase family. Archaeal HPRT subfamily.

Its function is as follows. May catalyze a purine salvage reaction, the substrate is unknown. This is HGPRTase-like protein from Natronomonas pharaonis (strain ATCC 35678 / DSM 2160 / CIP 103997 / JCM 8858 / NBRC 14720 / NCIMB 2260 / Gabara) (Halobacterium pharaonis).